A 647-amino-acid chain; its full sequence is Threonine--tRNA ligase (647 aa).

Residues Met-1–Thr-61 enclose the TGS domain. The interval Asp-240–Pro-538 is catalytic. Zn(2+) is bound by residues Cys-334, His-385, and His-515.

It belongs to the class-II aminoacyl-tRNA synthetase family. Homodimer. Zn(2+) is required as a cofactor.

Its subcellular location is the cytoplasm. The catalysed reaction is tRNA(Thr) + L-threonine + ATP = L-threonyl-tRNA(Thr) + AMP + diphosphate + H(+). In terms of biological role, catalyzes the attachment of threonine to tRNA(Thr) in a two-step reaction: L-threonine is first activated by ATP to form Thr-AMP and then transferred to the acceptor end of tRNA(Thr). Also edits incorrectly charged L-seryl-tRNA(Thr). This is Threonine--tRNA ligase from Streptococcus agalactiae serotype V (strain ATCC BAA-611 / 2603 V/R).